The sequence spans 194 residues: Flagellin A2 (194 aa).

The propeptide occupies M1–G12.

This sequence belongs to the archaeal flagellin family. In terms of processing, glycosylated.

It is found in the archaeal flagellum. In terms of biological role, flagellin is the subunit protein which polymerizes to form the filaments of archaeal flagella. The protein is Flagellin A2 (flaA2) of Halobacterium salinarum (strain ATCC 700922 / JCM 11081 / NRC-1) (Halobacterium halobium).